The following is a 45-amino-acid chain: Photosystem II reaction center protein K (45 aa).

A propeptide spanning residues 1-8 (MEAALLLA) is cleaved from the precursor. The chain crosses the membrane as a helical span at residues 24 to 44 (LPLIPLFFLLLAFVWQAAVGF).

The protein belongs to the PsbK family. As to quaternary structure, PSII is composed of 1 copy each of membrane proteins PsbA, PsbB, PsbC, PsbD, PsbE, PsbF, PsbH, PsbI, PsbJ, PsbK, PsbL, PsbM, PsbT, PsbX, PsbY, PsbZ, Psb30/Ycf12, peripheral proteins PsbO, CyanoQ (PsbQ), PsbU, PsbV and a large number of cofactors. It forms dimeric complexes.

It is found in the cellular thylakoid membrane. In terms of biological role, one of the components of the core complex of photosystem II (PSII). PSII is a light-driven water:plastoquinone oxidoreductase that uses light energy to abstract electrons from H(2)O, generating O(2) and a proton gradient subsequently used for ATP formation. It consists of a core antenna complex that captures photons, and an electron transfer chain that converts photonic excitation into a charge separation. This Picosynechococcus sp. (strain ATCC 27264 / PCC 7002 / PR-6) (Agmenellum quadruplicatum) protein is Photosystem II reaction center protein K.